The primary structure comprises 100 residues: Bombyxin A-2 homolog (100 aa).

A signal peptide spans 1–18 (MRTQVLFLIVVLAVMASG). 3 disulfide bridges follow: Cys-26–Cys-85, Cys-38–Cys-98, and Cys-84–Cys-89. The propeptide at 47 to 75 (PPYISSENEGYGWKWLERQRARQLDEARG) is c peptide like.

This sequence belongs to the insulin family. As to quaternary structure, heterodimer of a B chain and an A chain linked by two disulfide bonds.

The protein resides in the secreted. Functionally, brain peptide responsible for activation of prothoracic glands to produce ecdysone in insects. This is Bombyxin A-2 homolog (SBXA2) from Samia cynthia (Ailanthus silkmoth).